The chain runs to 85 residues: Small ribosomal subunit protein bS16c (85 aa).

The protein belongs to the bacterial ribosomal protein bS16 family.

It localises to the plastid. It is found in the chloroplast. The chain is Small ribosomal subunit protein bS16c from Oryza nivara (Indian wild rice).